A 557-amino-acid polypeptide reads, in one-letter code: Glutathione hydrolase proenzyme (557 aa).

Residues 1–24 (MQPVLFRTLSLGVAIAAASSSAFA) form the signal peptide. Residue arginine 94 participates in L-glutamate binding. Threonine 364 serves as the catalytic Nucleophile. Residues threonine 382, asparagine 384, glutamate 403, aspartate 406, 435–436 (SS), and 456–457 (GG) each bind L-glutamate.

Belongs to the gamma-glutamyltransferase family. As to quaternary structure, this enzyme consists of two polypeptide chains, which are synthesized in precursor form from a single polypeptide. In terms of processing, cleaved by autocatalysis into a large and a small subunit.

The protein localises to the periplasm. The enzyme catalyses an N-terminal (5-L-glutamyl)-[peptide] + an alpha-amino acid = 5-L-glutamyl amino acid + an N-terminal L-alpha-aminoacyl-[peptide]. It carries out the reaction glutathione + H2O = L-cysteinylglycine + L-glutamate. The catalysed reaction is an S-substituted glutathione + H2O = an S-substituted L-cysteinylglycine + L-glutamate. Its pathway is sulfur metabolism; glutathione metabolism. The chain is Glutathione hydrolase proenzyme (ggt) from Pseudomonas aeruginosa (strain ATCC 15692 / DSM 22644 / CIP 104116 / JCM 14847 / LMG 12228 / 1C / PRS 101 / PAO1).